Consider the following 440-residue polypeptide: Glycerol-3-phosphate dehydrogenase [NAD(+)], chloroplastic (440 aa).

The N-terminal 47 residues, 1 to 47 (MAAAAAATFLPHTPTPRRRLAVAVHSPTRRRLSLVFSGPPDGALSVA), are a transit peptide targeting the chloroplast. The segment at 57–76 (EEAAAAVSAPRGGGGGGGKE) is disordered. Residues 114–119 (GGGSFG), Phe-191, Lys-214, and Ala-248 contribute to the NAD(+) site. A substrate-binding site is contributed by Lys-214. Catalysis depends on Lys-299, which acts as the Proton acceptor. Residues Arg-363 and Glu-389 each contribute to the NAD(+) site. 363–364 (RN) contributes to the substrate binding site.

This sequence belongs to the NAD-dependent glycerol-3-phosphate dehydrogenase family.

The protein resides in the plastid. It localises to the chloroplast. The enzyme catalyses sn-glycerol 3-phosphate + NAD(+) = dihydroxyacetone phosphate + NADH + H(+). Its pathway is membrane lipid metabolism; glycerophospholipid metabolism. Functionally, required to supply glycerol-3-phosphate in the chloroplast for the synthesis of glycerolipids. This Oryza sativa subsp. japonica (Rice) protein is Glycerol-3-phosphate dehydrogenase [NAD(+)], chloroplastic.